We begin with the raw amino-acid sequence, 358 residues long: UDP-N-acetylglucosamine--N-acetylmuramyl-(pentapeptide) pyrophosphoryl-undecaprenol N-acetylglucosamine transferase (358 aa).

Residues 11–13 (TGG), Asn124, Arg164, Ser195, and Gln291 each bind UDP-N-acetyl-alpha-D-glucosamine.

Belongs to the glycosyltransferase 28 family. MurG subfamily.

The protein resides in the cell inner membrane. It carries out the reaction di-trans,octa-cis-undecaprenyl diphospho-N-acetyl-alpha-D-muramoyl-L-alanyl-D-glutamyl-meso-2,6-diaminopimeloyl-D-alanyl-D-alanine + UDP-N-acetyl-alpha-D-glucosamine = di-trans,octa-cis-undecaprenyl diphospho-[N-acetyl-alpha-D-glucosaminyl-(1-&gt;4)]-N-acetyl-alpha-D-muramoyl-L-alanyl-D-glutamyl-meso-2,6-diaminopimeloyl-D-alanyl-D-alanine + UDP + H(+). It participates in cell wall biogenesis; peptidoglycan biosynthesis. Its function is as follows. Cell wall formation. Catalyzes the transfer of a GlcNAc subunit on undecaprenyl-pyrophosphoryl-MurNAc-pentapeptide (lipid intermediate I) to form undecaprenyl-pyrophosphoryl-MurNAc-(pentapeptide)GlcNAc (lipid intermediate II). This Leptospira borgpetersenii serovar Hardjo-bovis (strain JB197) protein is UDP-N-acetylglucosamine--N-acetylmuramyl-(pentapeptide) pyrophosphoryl-undecaprenol N-acetylglucosamine transferase.